The following is a 205-amino-acid chain: ATP phosphoribosyltransferase (205 aa).

This sequence belongs to the ATP phosphoribosyltransferase family. Short subfamily. As to quaternary structure, heteromultimer composed of HisG and HisZ subunits.

It is found in the cytoplasm. The catalysed reaction is 1-(5-phospho-beta-D-ribosyl)-ATP + diphosphate = 5-phospho-alpha-D-ribose 1-diphosphate + ATP. It functions in the pathway amino-acid biosynthesis; L-histidine biosynthesis; L-histidine from 5-phospho-alpha-D-ribose 1-diphosphate: step 1/9. Catalyzes the condensation of ATP and 5-phosphoribose 1-diphosphate to form N'-(5'-phosphoribosyl)-ATP (PR-ATP). Has a crucial role in the pathway because the rate of histidine biosynthesis seems to be controlled primarily by regulation of HisG enzymatic activity. The protein is ATP phosphoribosyltransferase of Staphylococcus saprophyticus subsp. saprophyticus (strain ATCC 15305 / DSM 20229 / NCIMB 8711 / NCTC 7292 / S-41).